Consider the following 115-residue polypeptide: Hydrogenase maturation factor HypA (115 aa).

H2 is a binding site for Ni(2+). The Zn(2+) site is built by C74, C77, C90, and C93.

Belongs to the HypA/HybF family.

Functionally, involved in the maturation of [NiFe] hydrogenases. Required for nickel insertion into the metal center of the hydrogenase. The chain is Hydrogenase maturation factor HypA from Desulfosudis oleivorans (strain DSM 6200 / JCM 39069 / Hxd3) (Desulfococcus oleovorans).